The following is a 44-amino-acid chain: Thymosin beta (44 aa).

Over residues 1 to 17 the composition is skewed to basic and acidic residues; sequence MSDKPDVKEVESFDKTT. The segment at 1-44 is disordered; sequence MSDKPDVKEVESFDKTTLKKTTTNEKNTLPTKEVIEQEKSGGSD. The segment covering 19–32 has biased composition (low complexity); that stretch reads KKTTTNEKNTLPTK. Basic and acidic residues predominate over residues 33-44; that stretch reads EVIEQEKSGGSD.

Belongs to the thymosin beta family.

The protein localises to the cytoplasm. The protein resides in the cytoskeleton. Plays an important role in the organization of the cytoskeleton. Binds to and sequesters actin monomers (G actin) and therefore inhibits actin polymerization. The polypeptide is Thymosin beta (Gillichthys mirabilis (Long-jawed mudsucker)).